Here is a 498-residue protein sequence, read N- to C-terminus: Glutamyl-tRNA(Gln) amidotransferase subunit A (498 aa).

Active-site charge relay system residues include lysine 85 and serine 160. The Acyl-ester intermediate role is filled by serine 184.

Belongs to the amidase family. GatA subfamily. In terms of assembly, heterotrimer of A, B and C subunits.

The catalysed reaction is L-glutamyl-tRNA(Gln) + L-glutamine + ATP + H2O = L-glutaminyl-tRNA(Gln) + L-glutamate + ADP + phosphate + H(+). Allows the formation of correctly charged Gln-tRNA(Gln) through the transamidation of misacylated Glu-tRNA(Gln) in organisms which lack glutaminyl-tRNA synthetase. The reaction takes place in the presence of glutamine and ATP through an activated gamma-phospho-Glu-tRNA(Gln). This chain is Glutamyl-tRNA(Gln) amidotransferase subunit A, found in Mycolicibacterium vanbaalenii (strain DSM 7251 / JCM 13017 / BCRC 16820 / KCTC 9966 / NRRL B-24157 / PYR-1) (Mycobacterium vanbaalenii).